Consider the following 291-residue polypeptide: Energy-coupling factor transporter ATP-binding protein EcfA2 (291 aa).

An ABC transporter domain is found at 3–246 (ITFKDVSYTY…PEWLTSKQLG (244 aa)). An ATP-binding site is contributed by 40–47 (GHTGSGKS).

It belongs to the ABC transporter superfamily. Energy-coupling factor EcfA family. As to quaternary structure, forms a stable energy-coupling factor (ECF) transporter complex composed of 2 membrane-embedded substrate-binding proteins (S component), 2 ATP-binding proteins (A component) and 2 transmembrane proteins (T component).

It localises to the cell membrane. Its function is as follows. ATP-binding (A) component of a common energy-coupling factor (ECF) ABC-transporter complex. Unlike classic ABC transporters this ECF transporter provides the energy necessary to transport a number of different substrates. The polypeptide is Energy-coupling factor transporter ATP-binding protein EcfA2 (Latilactobacillus sakei subsp. sakei (strain 23K) (Lactobacillus sakei subsp. sakei)).